The chain runs to 512 residues: Nephrocan (512 aa).

A signal peptide spans 1-19 (MHPLWAFLLGLSLTNGLSA). The 25-residue stretch at 20–44 (NCPGRCSCDSMQSVQCYRLMELPSG) folds into the LRRNT domain. LRR repeat units lie at residues 45–69 (IPST…NFTG), 71–93 (LALE…TFKT), 94–117 (LSTL…LPAN), 119–138 (EVLK…EFEG), 139–162 (LKNL…MLSP), 164–185 (ASLQ…PLSL), 186–208 (PHLK…VFTS), 210–232 (QNLQ…LPKS), 234–253 (LSLK…DMKH), 254–276 (LENL…AQQL), 277–299 (TNLT…LPSR), 301–320 (QKLD…EFQD), 321–344 (LRDL…ALQR), 346–371 (SQLS…TLAR), 373–389 (DLKG…ELRD), 390–413 (LKQL…ALEG), and 415–442 (PRLR…VLKA). A glycan (N-linked (GlcNAc...) asparagine) is linked at N66. Positions 474-484 (EHHLQQSEKSK) are enriched in basic and acidic residues. The segment at 474 to 512 (EHHLQQSEKSKETKKKPKPEDSSSIRLNMDDDDDDYEID) is disordered. Residues 503–512 (DDDDDDYEID) are compositionally biased toward acidic residues.

This sequence belongs to the small leucine-rich proteoglycan (SLRP) family. Post-translationally, N-glycosylated. As to expression, expressed at highest levels in the kidney, where it is primarily detected in the epithelial cells of distal tubules and collecting ducts, and more weakly in proximal epithelial cells. Expressed at lower levels in heart and lung (at protein level). Detected in skeletal muscle.

The protein localises to the secreted. In terms of biological role, may inhibit TGF-beta signaling. This is Nephrocan from Mus musculus (Mouse).